The following is a 103-amino-acid chain: Small ribosomal subunit protein uS10 (103 aa).

This sequence belongs to the universal ribosomal protein uS10 family. As to quaternary structure, part of the 30S ribosomal subunit.

Its function is as follows. Involved in the binding of tRNA to the ribosomes. This Ruminiclostridium cellulolyticum (strain ATCC 35319 / DSM 5812 / JCM 6584 / H10) (Clostridium cellulolyticum) protein is Small ribosomal subunit protein uS10.